The chain runs to 173 residues: MAAETGTAKPARAKKEPQPLVIPKNATDEQRLRLERLMRNPDKLAAIPERPKEWSPRSAPEFVRDVMGSSAGAGSGEFHVYRHLRRREYQRQEFLDRVSEKHNLDDDFQRKLMENKKLEEEKTAKRRLKRQKLKEKKKMAKMAKKEEKKEEIEKHVELDNSPESSDKSDLEDQ.

Disordered stretches follow at residues methionine 1–threonine 27 and asparagine 115–glutamine 173. Residues arginine 50–methionine 142 form a required for RNA-binding region. Residues serine 99–serine 161 are a coiled coil. The segment covering alanine 124–methionine 142 has biased composition (basic residues). Positions lysine 125–lysine 137 are required for nuclear localization. Positions alanine 143 to glutamine 173 are enriched in basic and acidic residues.

The protein belongs to the PRKRIP1 family. Component of the pre-catalytic and post-catalytic spliceosome complexes.

The protein localises to the nucleus. Its subcellular location is the nucleolus. Required for pre-mRNA splicing as component of the spliceosome. Binds double-stranded RNA. This chain is PRKR-interacting protein 1 homolog (prkrip1), found in Xenopus tropicalis (Western clawed frog).